Reading from the N-terminus, the 182-residue chain is MKEQEIQSSMNKSVEATQRNFNTIRTGRANASLLDRISVEYYGAETPIKSLASISTIDSQTISIQPFDISSLQTIEKAISVSDLGITPNNDGKVIRINVPPLTEERRKEFCKLASKYAEEGKVALRNIRRDAVDKEKKDEKEGLISKDVSRDNQLEIQKFTDKYISLIETKLSEKEKEILKV.

It belongs to the RRF family.

It is found in the cytoplasm. Functionally, responsible for the release of ribosomes from messenger RNA at the termination of protein biosynthesis. May increase the efficiency of translation by recycling ribosomes from one round of translation to another. The chain is Ribosome-recycling factor from Prochlorococcus marinus subsp. pastoris (strain CCMP1986 / NIES-2087 / MED4).